The chain runs to 192 residues: Peptidyl-tRNA hydrolase (192 aa).

Tyrosine 17 contributes to the tRNA binding site. Histidine 22 serves as the catalytic Proton acceptor. TRNA-binding residues include phenylalanine 67, asparagine 69, and asparagine 115.

This sequence belongs to the PTH family. As to quaternary structure, monomer.

It is found in the cytoplasm. It catalyses the reaction an N-acyl-L-alpha-aminoacyl-tRNA + H2O = an N-acyl-L-amino acid + a tRNA + H(+). In terms of biological role, hydrolyzes ribosome-free peptidyl-tRNAs (with 1 or more amino acids incorporated), which drop off the ribosome during protein synthesis, or as a result of ribosome stalling. Functionally, catalyzes the release of premature peptidyl moieties from peptidyl-tRNA molecules trapped in stalled 50S ribosomal subunits, and thus maintains levels of free tRNAs and 50S ribosomes. This chain is Peptidyl-tRNA hydrolase, found in Methylobacillus flagellatus (strain ATCC 51484 / DSM 6875 / VKM B-1610 / KT).